We begin with the raw amino-acid sequence, 233 residues long: Ras-related protein RABA6a (233 aa).

20 to 27 (GDSAVGKS) provides a ligand contact to GTP. An Effector region motif is present at residues 42 to 50 (SKPTIGVEF). GTP is bound by residues 68–72 (DTAGQ), 126–129 (NKSD), and 156–157 (SA). S-geranylgeranyl cysteine attachment occurs at residues cysteine 230 and cysteine 231.

This sequence belongs to the small GTPase superfamily. Rab family.

It is found in the cell membrane. Functionally, intracellular vesicle trafficking and protein transport. This is Ras-related protein RABA6a (RABA6A) from Arabidopsis thaliana (Mouse-ear cress).